A 112-amino-acid chain; its full sequence is Inner membrane assembly complex subunit 17 (112 aa).

The transit peptide at 1-24 directs the protein to the mitochondrion; it reads MLRKLPINFAKWTVKKVPVQQKRF. Residues 25–44 lie on the Mitochondrial matrix side of the membrane; the sequence is NSQQKEISPHIMFYKNYARP. A helical transmembrane segment spans residues 45–62; the sequence is LGKVTLFALATYYGLEIV. Topologically, residues 63–112 are mitochondrial intermembrane; sequence WWKLDASEQEAIKNSKLLICESSFSLLTFRRITEFRECEIKTRDLYDPEI.

Belongs to the INA17 family. As to quaternary structure, component of the inner membrane assembly (INA) complex. Interacts with a subset of F(1)F(0)-ATP synthase subunits of the F(1)-domain and the peripheral stalk.

The protein resides in the mitochondrion inner membrane. In terms of biological role, component of the INA complex (INAC) that promotes the biogenesis of mitochondrial F(1)F(0)-ATP synthase. INAC facilitates the assembly of the peripheral stalk and promotes the assembly of the catalytic F(1)-domain with the membrane-embedded F(0)-domain. The polypeptide is Inner membrane assembly complex subunit 17 (Schizosaccharomyces pombe (strain 972 / ATCC 24843) (Fission yeast)).